The following is a 469-amino-acid chain: MVLEGNPEVGSPRTSDLQHRGNKGSCVLSSPGEDAQPGEEPIKYGELIVLGCCEEGGEETEAQRGEVTGPRAHSCYNGCLASGDKGRRRSRLALSRRSHANGVKPDVMHHISTPLVSKALSNRGQHSISYTLSRSHSVIVEYTHDSDTDMFQIGRSTENMIDFVVTDTSPGGGAAEGPSAQSTISRYACRILCDRRPPYTARIYAAGFDASSNIFLGERAAKWRTPDGLMDGLTTNGVLVMHPAGGFSEDSAPGVWREISVCGNVYTLRDSRSAQQRGKLVENESNVLQDGSLIDLCGATLLWRTPAGLLRAPTLKQLEAQRQEANAARPQCPVGLSTLAFPSPARGRTAPDKQQPWVYVRCGHVHGYHGWGCRRERGPQERECPLCRLVGPYVPLWLGQEAGLCLDPGPPSHAFAPCGHVCSEKTARYWAQTPLPHGTHAFHAACPFCGAWLTGEHGCVRLIFQGPLD.

A disordered region spans residues 1-39 (MVLEGNPEVGSPRTSDLQHRGNKGSCVLSSPGEDAQPGE). At S11 the chain carries Phosphoserine.

Belongs to the pellino family. Interacts with TRAF6, MAP3K14 and MAP3K7. Post-translationally, phosphorylated by IRAK1 enhancing its E3 ligase activity. In terms of tissue distribution, highly expressed in brain, heart and testis, and at lower level in kidney, liver, lung, placenta, small intestine, spleen and stomach. Isoform 1 is not expressed in lung.

The enzyme catalyses S-ubiquitinyl-[E2 ubiquitin-conjugating enzyme]-L-cysteine + [acceptor protein]-L-lysine = [E2 ubiquitin-conjugating enzyme]-L-cysteine + N(6)-ubiquitinyl-[acceptor protein]-L-lysine.. It functions in the pathway protein modification; protein ubiquitination. Functionally, E3 ubiquitin ligase catalyzing the covalent attachment of ubiquitin moieties onto substrate proteins. Involved in the TLR and IL-1 signaling pathways via interaction with the complex containing IRAK kinases and TRAF6. Mediates 'Lys-63'-linked polyubiquitination of IRAK1. Can activate AP1/JUN and ELK1. Acts as a regulator of innate immunity by mediating 'Lys-63'-linked polyubiquitination of RIPK2 downstream of NOD1 and NOD2, thereby transforming RIPK2 into a scaffolding protein for downstream effectors, ultimately leading to activation of the NF-kappa-B and MAP kinases signaling. Catalyzes 'Lys-63'-linked polyubiquitination of RIPK2 in parallel of XIAP. This is E3 ubiquitin-protein ligase pellino homolog 3 from Homo sapiens (Human).